The sequence spans 1180 residues: MTGQLIQYGRHRKRRSYARISEILELPNLIEIQTKSYDWFLKEGLIEMFKDISPIEDFTGNLSLEFVDYKLGEPKYDLDESKNRDATYAAPLRVKVRLIIKETGEVKEQEVFMGDFPLMTDTGTFVINGAERVIVSQLVRSPSVYFNDKVDKNGKVSFGATVIPNRGAWLEYETDAKDVVFVRIDRTRKLPITVLLRALGFSTDQEIIDLLGDNEYLRNALDKDNTESTEAALLEIYERLRPGEPPTVENAKSLLYSRFFDPKRYDLASVGRYKMNKKLHLKHRLFNQVLAEPIVNTETGEIVAEEGTLLDRRNLDQIIDVLESNANQKVYDLDNGLLDEPIEIQSVKVYVPGDEEKRTTTIIGNAFPDDEVKCITPADILSSVSYFFNLLAGVGFTDDIDHLGNRRLRSVGELLQNQFRIGLSRMERVVRERMSLQDTESVTPQQLINIRPVIASIKEFFGSSQLSQFMDQANPLAELTHKRRLSALGPGGLTRERAGMEVRDVHYSHYGRMCPIETPEGPNIGLINSLSSYARVNEFGFIETPYRKVDIETNTVTSQIDYLTADEEDAYVVAQANARLDDNGKFLDDEVVCRFRGDNTVMARERMDYMDVSPKQVVSAATACIPFLENDDSNRALMGANMQRQAVPLMNPEAPFVGTGMEHVAARDSGAAVVAKYKGRVEHVEARQIKVRRIVEEGGKEIETDLDVYKLAKFARSNSGTCYNQRPIVEAGNIVTKGEILADGPSMELGEMALGRNVVVGFMTWDGYNYEDAVIMSERLVKDDVYTSIHIEEYESEARDTKLGPEEITRDIPNVSDNALKNLDDRGIIFVGAEVRDGDILVGKVTPKGVTELTAEERLLHAIFGEKAREVRDTSLRVPHGADGIVLDVKVFNREDGDELPPGVNQLVRVYIVQKRKIHVGDKMCGRHGNKGVISRILPEEDMPFMPDGTPIDIMLNPLGVPSRMNIGQVLELHLGMAAKNLGLHVASPVFDGANDEDVWSTIEEAGMARDGKTVLYDGRTGEPFDNRVSVGVMYMLKLAHMVDDKLHARSTGPYSLVTQQPLGGKAQFGGQRFGEMEVWALEAYGAAYTLQEILTYKSDDTVGRVKTYEAIVKGENIPRPGVPESFRVLMKELQSLGLDVKVMDNKDEEIEMRDLEDDDFVDSKINIAKAPMPEAEITE.

Belongs to the RNA polymerase beta chain family. The RNAP catalytic core consists of 2 alpha, 1 beta, 1 beta' and 1 omega subunit. When a sigma factor is associated with the core the holoenzyme is formed, which can initiate transcription.

The enzyme catalyses RNA(n) + a ribonucleoside 5'-triphosphate = RNA(n+1) + diphosphate. Functionally, DNA-dependent RNA polymerase catalyzes the transcription of DNA into RNA using the four ribonucleoside triphosphates as substrates. This Macrococcus caseolyticus (strain JCSC5402) (Macrococcoides caseolyticum) protein is DNA-directed RNA polymerase subunit beta.